A 190-amino-acid polypeptide reads, in one-letter code: GATA transcription factor 17 (190 aa).

The segment covering 1–14 has biased composition (basic and acidic residues); that stretch reads MSEGSEDTKTKLDS. Disordered stretches follow at residues 1 to 42 and 77 to 101; these read MSEG…DTKR and RQAA…NDLN. A GATA-type zinc finger spans residues 38 to 92; sequence GDTKRTCVDCGTIRTPLWRGGPAGPKSLCNACGIKSRKKRQAALGMRSEEKKKNR.

It belongs to the type IV zinc-finger family. Class B subfamily.

The protein resides in the nucleus. Its function is as follows. Transcriptional regulator that specifically binds 5'-GATA-3' or 5'-GAT-3' motifs within gene promoters. This chain is GATA transcription factor 17 (GATA17), found in Arabidopsis thaliana (Mouse-ear cress).